The primary structure comprises 250 residues: tRNA (guanine-N(1)-)-methyltransferase (250 aa).

S-adenosyl-L-methionine-binding positions include glycine 113 and isoleucine 133–leucine 138.

Belongs to the RNA methyltransferase TrmD family. In terms of assembly, homodimer.

Its subcellular location is the cytoplasm. The catalysed reaction is guanosine(37) in tRNA + S-adenosyl-L-methionine = N(1)-methylguanosine(37) in tRNA + S-adenosyl-L-homocysteine + H(+). Its function is as follows. Specifically methylates guanosine-37 in various tRNAs. This is tRNA (guanine-N(1)-)-methyltransferase from Shewanella amazonensis (strain ATCC BAA-1098 / SB2B).